Reading from the N-terminus, the 64-residue chain is DNA gyrase inhibitor YacG (64 aa).

Positions 7, 10, 26, and 30 each coordinate Zn(2+). The segment at 44–64 (SIPGEPVVIANDDYNNEESDY) is disordered.

Belongs to the DNA gyrase inhibitor YacG family. As to quaternary structure, interacts with GyrB. It depends on Zn(2+) as a cofactor.

Inhibits all the catalytic activities of DNA gyrase by preventing its interaction with DNA. Acts by binding directly to the C-terminal domain of GyrB, which probably disrupts DNA binding by the gyrase. This Idiomarina loihiensis (strain ATCC BAA-735 / DSM 15497 / L2-TR) protein is DNA gyrase inhibitor YacG.